Here is a 1007-residue protein sequence, read N- to C-terminus: Protocadherin alpha-C2 (1007 aa).

The N-terminal stretch at 1–42 (MEQAGTRPAATEHPRLRRPMPWLLLLPLLLLLLLLLPGPAAS) is a signal peptide. 5 consecutive Cadherin domains span residues 43 to 148 (QLRY…SPRF), 149 to 257 (PRPN…SPAF), 258 to 365 (DQST…APEV), 374 to 469 (VPEN…PPSF), and 470 to 579 (LEDS…APHI). Residues 43-708 (QLRYSVPEEQ…RTYSEITLYL (666 aa)) lie on the Extracellular side of the membrane. N-linked (GlcNAc...) asparagine glycans are attached at residues Asn-280 and Asn-436. N-linked (GlcNAc...) asparagine glycosylation is found at Asn-586 and Asn-657. Residues 594–691 (VPRTAPAGYL…DRVSKILPDT (98 aa)) form the Cadherin 6 domain. Residues 709-729 (IIALSTVSFIFLLTIIILSII) form a helical membrane-spanning segment. At 730–1007 (KCYRYTAYGT…GNSTTDNSDQ (278 aa)) the chain is on the cytoplasmic side. PXXP repeat units follow at residues 856 to 859 (PRQP), 889 to 892 (PGGP), 930 to 933 (PGNP), and 948 to 951 (PGSP). Residues 856-951 (PRQPNPDWRY…PDKFIIPGSP (96 aa)) form a 4 X 4 AA repeats of P-X-X-P region. The interval 885–1007 (LRAGPGGPDQ…GNSTTDNSDQ (123 aa)) is disordered. Residues 966 to 980 (DKSDFITFGKKEETK) are compositionally biased toward basic and acidic residues.

It is found in the cell membrane. Potential calcium-dependent cell-adhesion protein. May be involved in the establishment and maintenance of specific neuronal connections in the brain. The chain is Protocadherin alpha-C2 (PCDHAC2) from Homo sapiens (Human).